A 141-amino-acid polypeptide reads, in one-letter code: Large ribosomal subunit protein uL11 (141 aa).

Belongs to the universal ribosomal protein uL11 family. In terms of assembly, part of the ribosomal stalk of the 50S ribosomal subunit. Interacts with L10 and the large rRNA to form the base of the stalk. L10 forms an elongated spine to which L12 dimers bind in a sequential fashion forming a multimeric L10(L12)X complex. In terms of processing, one or more lysine residues are methylated.

Its function is as follows. Forms part of the ribosomal stalk which helps the ribosome interact with GTP-bound translation factors. This chain is Large ribosomal subunit protein uL11, found in Geobacillus kaustophilus (strain HTA426).